Reading from the N-terminus, the 417-residue chain is NADH-quinone oxidoreductase subunit D (417 aa).

This sequence belongs to the complex I 49 kDa subunit family. NDH-1 is composed of 14 different subunits. Subunits NuoB, C, D, E, F, and G constitute the peripheral sector of the complex.

The protein localises to the cell inner membrane. It carries out the reaction a quinone + NADH + 5 H(+)(in) = a quinol + NAD(+) + 4 H(+)(out). In terms of biological role, NDH-1 shuttles electrons from NADH, via FMN and iron-sulfur (Fe-S) centers, to quinones in the respiratory chain. The immediate electron acceptor for the enzyme in this species is believed to be ubiquinone. Couples the redox reaction to proton translocation (for every two electrons transferred, four hydrogen ions are translocated across the cytoplasmic membrane), and thus conserves the redox energy in a proton gradient. The polypeptide is NADH-quinone oxidoreductase subunit D (Legionella pneumophila (strain Corby)).